The following is a 616-amino-acid chain: Kelch-like protein 36 (616 aa).

Residues 46–113 enclose the BTB domain; sequence CDVVLVADEQ…LYGGELVLDG (68 aa). The region spanning 148 to 250 is the BACK domain; it reads YLYLQELASI…PKNDLLHRVK (103 aa). 6 Kelch repeats span residues 296-345, 346-397, 398-444, 446-493, 494-546, and 547-595; these read CLLF…VLGG, FIFI…SIED, MLVA…IYKD, VYIS…SLGD, SIYS…VWEG, and RIYI…VCAL.

As to quaternary structure, interacts with CUL3.

It participates in protein modification; protein ubiquitination. Its function is as follows. Probable substrate-specific adapter of an E3 ubiquitin-protein ligase complex which mediates the ubiquitination and subsequent proteasomal degradation of target proteins. The polypeptide is Kelch-like protein 36 (KLHL36) (Bos taurus (Bovine)).